Here is a 339-residue protein sequence, read N- to C-terminus: Cyclin-Y-like protein 1 (339 aa).

The Cyclin N-terminal domain maps to Gln181–Asn263.

The protein belongs to the cyclin family. Cyclin Y subfamily.

It is found in the cell membrane. In terms of biological role, key regulator of Wnt signaling implicated in various biological processes such as embryonic neurogenesis. The chain is Cyclin-Y-like protein 1 (ccnyl1) from Danio rerio (Zebrafish).